A 152-amino-acid polypeptide reads, in one-letter code: D-aminoacyl-tRNA deacylase (152 aa).

The short motif at 142-143 (GP) is the Gly-cisPro motif, important for rejection of L-amino acids element.

The protein belongs to the DTD family. Homodimer.

The protein resides in the cytoplasm. It catalyses the reaction glycyl-tRNA(Ala) + H2O = tRNA(Ala) + glycine + H(+). The catalysed reaction is a D-aminoacyl-tRNA + H2O = a tRNA + a D-alpha-amino acid + H(+). Its function is as follows. An aminoacyl-tRNA editing enzyme that deacylates mischarged D-aminoacyl-tRNAs. Also deacylates mischarged glycyl-tRNA(Ala), protecting cells against glycine mischarging by AlaRS. Acts via tRNA-based rather than protein-based catalysis; rejects L-amino acids rather than detecting D-amino acids in the active site. By recycling D-aminoacyl-tRNA to D-amino acids and free tRNA molecules, this enzyme counteracts the toxicity associated with the formation of D-aminoacyl-tRNA entities in vivo and helps enforce protein L-homochirality. This Burkholderia ambifaria (strain ATCC BAA-244 / DSM 16087 / CCUG 44356 / LMG 19182 / AMMD) (Burkholderia cepacia (strain AMMD)) protein is D-aminoacyl-tRNA deacylase.